We begin with the raw amino-acid sequence, 157 residues long: Endoribonuclease YbeY (157 aa).

3 residues coordinate Zn(2+): H112, H116, and H122.

Belongs to the endoribonuclease YbeY family. Zn(2+) is required as a cofactor.

It localises to the cytoplasm. In terms of biological role, single strand-specific metallo-endoribonuclease involved in late-stage 70S ribosome quality control and in maturation of the 3' terminus of the 16S rRNA. The sequence is that of Endoribonuclease YbeY from Marinobacter nauticus (strain ATCC 700491 / DSM 11845 / VT8) (Marinobacter aquaeolei).